The sequence spans 180 residues: tRNA-splicing endonuclease (180 aa).

Residues Y117, H125, and K156 contribute to the active site.

This sequence belongs to the tRNA-intron endonuclease family. Archaeal short subfamily. Homotetramer; although the tetramer contains four active sites, only two participate in the cleavage. Therefore, it should be considered as a dimer of dimers.

The catalysed reaction is pretRNA = a 3'-half-tRNA molecule with a 5'-OH end + a 5'-half-tRNA molecule with a 2',3'-cyclic phosphate end + an intron with a 2',3'-cyclic phosphate and a 5'-hydroxyl terminus.. In terms of biological role, endonuclease that removes tRNA introns. Cleaves pre-tRNA at the 5'- and 3'-splice sites to release the intron. The products are an intron and two tRNA half-molecules bearing 2',3' cyclic phosphate and 5'-OH termini. Recognizes a pseudosymmetric substrate in which 2 bulged loops of 3 bases are separated by a stem of 4 bp. The chain is tRNA-splicing endonuclease from Sulfurisphaera tokodaii (strain DSM 16993 / JCM 10545 / NBRC 100140 / 7) (Sulfolobus tokodaii).